We begin with the raw amino-acid sequence, 365 residues long: Probable dual-specificity RNA methyltransferase RlmN (365 aa).

Glu-99 (proton acceptor) is an active-site residue. The Radical SAM core domain maps to 105–344 (QSYGLSVCVT…CVVRQEHGTD (240 aa)). An intrachain disulfide couples Cys-112 to Cys-349. [4Fe-4S] cluster is bound by residues Cys-119, Cys-123, and Cys-126. Residues 171-172 (GE), Ser-203, 227-229 (SLH), and Asn-305 contribute to the S-adenosyl-L-methionine site. The S-methylcysteine intermediate role is filled by Cys-349.

It belongs to the radical SAM superfamily. RlmN family. [4Fe-4S] cluster serves as cofactor.

The protein resides in the cytoplasm. The catalysed reaction is adenosine(2503) in 23S rRNA + 2 reduced [2Fe-2S]-[ferredoxin] + 2 S-adenosyl-L-methionine = 2-methyladenosine(2503) in 23S rRNA + 5'-deoxyadenosine + L-methionine + 2 oxidized [2Fe-2S]-[ferredoxin] + S-adenosyl-L-homocysteine. It catalyses the reaction adenosine(37) in tRNA + 2 reduced [2Fe-2S]-[ferredoxin] + 2 S-adenosyl-L-methionine = 2-methyladenosine(37) in tRNA + 5'-deoxyadenosine + L-methionine + 2 oxidized [2Fe-2S]-[ferredoxin] + S-adenosyl-L-homocysteine. Its function is as follows. Specifically methylates position 2 of adenine 2503 in 23S rRNA and position 2 of adenine 37 in tRNAs. In Lactococcus lactis subsp. cremoris (strain MG1363), this protein is Probable dual-specificity RNA methyltransferase RlmN.